Reading from the N-terminus, the 160-residue chain is Lymphocyte antigen 96 (160 aa).

The N-terminal stretch at 1-16 (MFPFMLFSTLFSSIFT) is a signal peptide. Cystine bridges form between Cys25-Cys51, Cys37-Cys148, and Cys95-Cys105. Asn26 is a glycosylation site (N-linked (GlcNAc...) asparagine). N-linked (GlcNAc...) asparagine glycosylation occurs at Asn114. The tract at residues 119–123 (FSFQG) is interaction with lipopolysaccharide. N-linked (GlcNAc...) asparagine glycosylation occurs at Asn150.

In terms of assembly, heterogeneous homomer formed from homodimers; disulfide-linked. Belongs to the lipopolysaccharide (LPS) receptor, a multi-protein complex containing at least CD14, LY96 and TLR4. Binds to the extracellular domains of TLR2 and TLR4. Ligand binding induces interaction with TLR4 and oligomerization of the complex. N-glycosylated.

It is found in the secreted. Its subcellular location is the extracellular space. In terms of biological role, binds bacterial lipopolysaccharide (LPS). Cooperates with TLR4 in the innate immune response to bacterial lipopolysaccharide (LPS), and with TLR2 in the response to cell wall components from Gram-positive and Gram-negative bacteria. Enhances TLR4-dependent activation of NF-kappa-B. Cells expressing both LY96 and TLR4, but not TLR4 alone, respond to LPS. The protein is Lymphocyte antigen 96 (LY96) of Bos taurus (Bovine).